We begin with the raw amino-acid sequence, 206 residues long: MAKGLIGKKVGMSQIFDEQGNIIPVTVLEVGPCAVSQVKSVENDGYEAIQLAFQDIKEIQTSKAEKNHLAKAGLGPKKVLKEFRSFGDSPTAGSVLKIQDVFAVSDVVKVTGVSKGRGYQGVVKRHGHAGGPGAHGSRFHRHPGSMGANSTPSRVFKGVKLPGRTGSQKTTVRNLKVVRINEEKNLLFVSGAVPGTANTVITIEKI.

Residues 126–155 form a disordered region; it reads HGHAGGPGAHGSRFHRHPGSMGANSTPSRV.

The protein belongs to the universal ribosomal protein uL3 family. Part of the 50S ribosomal subunit. Forms a cluster with proteins L14 and L19.

In terms of biological role, one of the primary rRNA binding proteins, it binds directly near the 3'-end of the 23S rRNA, where it nucleates assembly of the 50S subunit. The polypeptide is Large ribosomal subunit protein uL3 (Leptospira interrogans serogroup Icterohaemorrhagiae serovar copenhageni (strain Fiocruz L1-130)).